Consider the following 345-residue polypeptide: Phosphate acyltransferase (345 aa).

Belongs to the PlsX family. Homodimer. Probably interacts with PlsY.

It localises to the cytoplasm. The enzyme catalyses a fatty acyl-[ACP] + phosphate = an acyl phosphate + holo-[ACP]. It functions in the pathway lipid metabolism; phospholipid metabolism. Its function is as follows. Catalyzes the reversible formation of acyl-phosphate (acyl-PO(4)) from acyl-[acyl-carrier-protein] (acyl-ACP). This enzyme utilizes acyl-ACP as fatty acyl donor, but not acyl-CoA. The polypeptide is Phosphate acyltransferase (Photorhabdus laumondii subsp. laumondii (strain DSM 15139 / CIP 105565 / TT01) (Photorhabdus luminescens subsp. laumondii)).